The sequence spans 109 residues: Hainantoxin-XVIII-3 (109 aa).

Positions 1-18 (MKLSIIIIATSLVIAVVA) are cleaved as a signal peptide. A propeptide spanning residues 19-46 (FPSKDSKAIENDKTEQRMEIVVQETARA) is cleaved from the precursor. Intrachain disulfides connect cysteine 47–cysteine 62, cysteine 55–cysteine 68, cysteine 59–cysteine 108, and cysteine 61–cysteine 81.

It belongs to the neurotoxin 25 family. F7 subfamily. Expressed by the venom gland.

The protein localises to the secreted. Functionally, putative ion channel inhibitor. The sequence is that of Hainantoxin-XVIII-3 from Cyriopagopus hainanus (Chinese bird spider).